The following is a 190-amino-acid chain: Imidazoleglycerol-phosphate dehydratase (190 aa).

This sequence belongs to the imidazoleglycerol-phosphate dehydratase family.

The protein resides in the cytoplasm. The enzyme catalyses D-erythro-1-(imidazol-4-yl)glycerol 3-phosphate = 3-(imidazol-4-yl)-2-oxopropyl phosphate + H2O. The protein operates within amino-acid biosynthesis; L-histidine biosynthesis; L-histidine from 5-phospho-alpha-D-ribose 1-diphosphate: step 6/9. In Nitratiruptor sp. (strain SB155-2), this protein is Imidazoleglycerol-phosphate dehydratase.